Reading from the N-terminus, the 288-residue chain is Light-independent protochlorophyllide reductase iron-sulfur ATP-binding protein (288 aa).

ATP-binding positions include 10 to 15 (GIGKST) and K39. A Mg(2+)-binding site is contributed by S14. Residues C95 and C129 each coordinate [4Fe-4S] cluster. 180–181 (NR) contributes to the ATP binding site.

Belongs to the NifH/BchL/ChlL family. As to quaternary structure, homodimer. Protochlorophyllide reductase is composed of three subunits; ChlL, ChlN and ChlB. [4Fe-4S] cluster is required as a cofactor.

It carries out the reaction chlorophyllide a + oxidized 2[4Fe-4S]-[ferredoxin] + 2 ADP + 2 phosphate = protochlorophyllide a + reduced 2[4Fe-4S]-[ferredoxin] + 2 ATP + 2 H2O. It participates in porphyrin-containing compound metabolism; chlorophyll biosynthesis (light-independent). Component of the dark-operative protochlorophyllide reductase (DPOR) that uses Mg-ATP and reduced ferredoxin to reduce ring D of protochlorophyllide (Pchlide) to form chlorophyllide a (Chlide). This reaction is light-independent. The L component serves as a unique electron donor to the NB-component of the complex, and binds Mg-ATP. The protein is Light-independent protochlorophyllide reductase iron-sulfur ATP-binding protein of Nostoc sp. (strain PCC 7120 / SAG 25.82 / UTEX 2576).